The primary structure comprises 608 residues: Aspartate--tRNA(Asp/Asn) ligase (608 aa).

L-aspartate is bound at residue Glu-187. An aspartate region spans residues 211–214 (QQFK). L-aspartate-binding residues include Arg-233 and His-461. 233-235 (RDE) lines the ATP pocket. Glu-495 contributes to the ATP binding site. Arg-502 contacts L-aspartate. 547–550 (GLDR) provides a ligand contact to ATP.

It belongs to the class-II aminoacyl-tRNA synthetase family. Type 1 subfamily. As to quaternary structure, homodimer.

It is found in the cytoplasm. The catalysed reaction is tRNA(Asx) + L-aspartate + ATP = L-aspartyl-tRNA(Asx) + AMP + diphosphate. Aspartyl-tRNA synthetase with relaxed tRNA specificity since it is able to aspartylate not only its cognate tRNA(Asp) but also tRNA(Asn). Reaction proceeds in two steps: L-aspartate is first activated by ATP to form Asp-AMP and then transferred to the acceptor end of tRNA(Asp/Asn). This chain is Aspartate--tRNA(Asp/Asn) ligase, found in Prosthecochloris aestuarii (strain DSM 271 / SK 413).